The chain runs to 1187 residues: Nucleolar protein 6 (1187 aa).

The span at 1-20 shows a compositional bias: basic and acidic residues; that stretch reads MGRIKENQSKKKTLLRDSKA. Disordered regions lie at residues 1-64 and 1134-1187; these read MGRI…FKHP and REQR…SALC.

The protein belongs to the NRAP family. In terms of assembly, part of the small subunit (SSU) processome, composed of more than 70 proteins and the RNA chaperone small nucleolar RNA (snoRNA) U3.

Its subcellular location is the nucleus. It is found in the nucleolus. The protein resides in the chromosome. Its function is as follows. Part of the small subunit (SSU) processome, first precursor of the small eukaryotic ribosomal subunit. During the assembly of the SSU processome in the nucleolus, many ribosome biogenesis factors, an RNA chaperone and ribosomal proteins associate with the nascent pre-rRNA and work in concert to generate RNA folding, modifications, rearrangements and cleavage as well as targeted degradation of pre-ribosomal RNA by the RNA exosome. This is Nucleolar protein 6 from Drosophila mojavensis (Fruit fly).